The following is a 141-amino-acid chain: D-aminoacyl-tRNA deacylase (141 aa).

A Gly-cisPro motif, important for rejection of L-amino acids motif is present at residues 133-134 (GP).

This sequence belongs to the DTD family. Homodimer.

It is found in the cytoplasm. It catalyses the reaction glycyl-tRNA(Ala) + H2O = tRNA(Ala) + glycine + H(+). The enzyme catalyses a D-aminoacyl-tRNA + H2O = a tRNA + a D-alpha-amino acid + H(+). In terms of biological role, an aminoacyl-tRNA editing enzyme that deacylates mischarged D-aminoacyl-tRNAs. Also deacylates mischarged glycyl-tRNA(Ala), protecting cells against glycine mischarging by AlaRS. Acts via tRNA-based rather than protein-based catalysis; rejects L-amino acids rather than detecting D-amino acids in the active site. By recycling D-aminoacyl-tRNA to D-amino acids and free tRNA molecules, this enzyme counteracts the toxicity associated with the formation of D-aminoacyl-tRNA entities in vivo and helps enforce protein L-homochirality. This chain is D-aminoacyl-tRNA deacylase, found in Nautilia profundicola (strain ATCC BAA-1463 / DSM 18972 / AmH).